The sequence spans 104 residues: Large ribosomal subunit protein uL24 (104 aa).

It belongs to the universal ribosomal protein uL24 family. In terms of assembly, part of the 50S ribosomal subunit.

Functionally, one of two assembly initiator proteins, it binds directly to the 5'-end of the 23S rRNA, where it nucleates assembly of the 50S subunit. One of the proteins that surrounds the polypeptide exit tunnel on the outside of the subunit. This chain is Large ribosomal subunit protein uL24, found in Pseudomonas fluorescens (strain SBW25).